A 134-amino-acid polypeptide reads, in one-letter code: Holo-[acyl-carrier-protein] synthase (134 aa).

Mg(2+)-binding residues include Asp8 and Glu57.

This sequence belongs to the P-Pant transferase superfamily. AcpS family. Mg(2+) is required as a cofactor.

It is found in the cytoplasm. The catalysed reaction is apo-[ACP] + CoA = holo-[ACP] + adenosine 3',5'-bisphosphate + H(+). Its function is as follows. Transfers the 4'-phosphopantetheine moiety from coenzyme A to a Ser of acyl-carrier-protein. This is Holo-[acyl-carrier-protein] synthase from Roseobacter denitrificans (strain ATCC 33942 / OCh 114) (Erythrobacter sp. (strain OCh 114)).